A 77-amino-acid chain; its full sequence is Translation initiation factor IF-1, chloroplastic (77 aa).

Residues 1–71 (MKEQKLIHEG…TRGRIIYRLR (71 aa)) form the S1-like domain.

The protein belongs to the IF-1 family. In terms of assembly, component of the 30S ribosomal translation pre-initiation complex which assembles on the 30S ribosome in the order IF-2 and IF-3, IF-1 and N-formylmethionyl-tRNA(fMet); mRNA recruitment can occur at any time during PIC assembly.

Its subcellular location is the plastid. It is found in the chloroplast. In terms of biological role, one of the essential components for the initiation of protein synthesis. Stabilizes the binding of IF-2 and IF-3 on the 30S subunit to which N-formylmethionyl-tRNA(fMet) subsequently binds. Helps modulate mRNA selection, yielding the 30S pre-initiation complex (PIC). Upon addition of the 50S ribosomal subunit IF-1, IF-2 and IF-3 are released leaving the mature 70S translation initiation complex. This Ceratophyllum demersum (Rigid hornwort) protein is Translation initiation factor IF-1, chloroplastic.